The chain runs to 2000 residues: Myosin-14 (2000 aa).

A2 carries the N-acetylalanine modification. T33 carries the post-translational modification Phosphothreonine. In terms of domain architecture, Myosin N-terminal SH3-like spans 47–97 (TARRMVWVPSELHGFEAAALRDEGEEEAEVELAESGRRLRLPRDQIQRMNP). Residue S56 is modified to Phosphoserine. The region spanning 101–804 (SKAEDMAELT…VLAQLEEERD (704 aa)) is the Myosin motor domain. 194–201 (GESGAGKT) contacts ATP. Positions 682-704 (LSRLMATLSNTNPSFVRCIVPNH) are actin-binding. The region spanning 807 to 836 (VTDIIVSFQAAARGYLARRAFQRRQQQQSA) is the IQ domain. A coiled-coil region spans residues 866–1951 (LQVTRQDEVL…VTTLRNRLRR (1086 aa)). S925 carries the phosphoserine modification. The interval 1173–1197 (RGELEDTLDSTNAQQELRSKREQEV) is disordered. T1198 is subject to Phosphothreonine. Phosphoserine occurs at positions 1249 and 1280. 5 disordered regions span residues 1260–1311 (ELSS…AELE), 1597–1629 (HERD…RDEE), 1720–1751 (SDRA…TLEE), 1910–1942 (AEEE…NREV), and 1967–2000 (LEEG…ATPQ). A compositionally biased stretch (basic and acidic residues) spans 1290-1304 (SDSERARSEAAEKLQ). Positions 1720–1732 (SDRARRQAQQDRD) are enriched in basic and acidic residues. A compositionally biased stretch (acidic residues) spans 1971–1980 (VASDEEEAEG). A phosphoserine mark is found at S1973 and S1985. A compositionally biased stretch (low complexity) spans 1981-1991 (AEPGSAPGQEP). T1998 is modified (phosphothreonine).

It belongs to the TRAFAC class myosin-kinesin ATPase superfamily. Myosin family. In terms of assembly, myosin is a hexameric protein that consists of 2 heavy chain subunits (MHC), 2 alkali light chain subunits (MLC) and 2 regulatory light chain subunits (MLC-2). Highest levels in lung, kidney, brain and colon, very low levels in liver and bladder and no expression in spleen or seminal vesicle (at protein level). Isoform 1 is expressed in liver, kidney and testis with low levels in skeletal muscle and heart. Isoform 1 and isoform 2 are expressed in brain and lung. Isoform 2 is the main isoform expressed in skeletal muscle and heart. Isoform 3 is limited to brain stem, cerebellum and spinal cord.

In terms of biological role, cellular myosin that appears to play a role in cytokinesis, cell shape, and specialized functions such as secretion and capping. The chain is Myosin-14 (Myh14) from Mus musculus (Mouse).